Consider the following 163-residue polypeptide: Cyanate hydratase (163 aa).

Catalysis depends on residues arginine 103, glutamate 106, and serine 129.

The protein belongs to the cyanase family.

The catalysed reaction is cyanate + hydrogencarbonate + 3 H(+) = NH4(+) + 2 CO2. Its function is as follows. Catalyzes the reaction of cyanate with bicarbonate to produce ammonia and carbon dioxide. The polypeptide is Cyanate hydratase (Ajellomyces capsulatus (strain G186AR / H82 / ATCC MYA-2454 / RMSCC 2432) (Darling's disease fungus)).